The following is a 149-amino-acid chain: Large ribosomal subunit protein uL22c (149 aa).

The protein belongs to the universal ribosomal protein uL22 family. Part of the 50S ribosomal subunit.

Its subcellular location is the plastid. It is found in the chloroplast. Its function is as follows. This protein binds specifically to 23S rRNA. In terms of biological role, the globular domain of the protein is located near the polypeptide exit tunnel on the outside of the subunit, while an extended beta-hairpin is found that lines the wall of the exit tunnel in the center of the 70S ribosome. In Brachypodium distachyon (Purple false brome), this protein is Large ribosomal subunit protein uL22c (rpl22).